The primary structure comprises 69 residues: Disintegrin EMF10A (69 aa).

The 66-residue stretch at 1–66 (MNSANPCCDP…DCPRNPWKSE (66 aa)) folds into the Disintegrin domain. 4 disulfides stabilise this stretch: cysteine 7-cysteine 30, cysteine 21-cysteine 27, cysteine 26-cysteine 51, and cysteine 39-cysteine 58. The Cell attachment site signature appears at 43–45 (RGD).

The protein belongs to the disintegrin family. Dimeric disintegrin subfamily. In terms of assembly, heterodimer with EMF10B; disulfide-linked. Expressed by the venom gland.

The protein resides in the secreted. Extremely potent and selective inhibitor of integrin alpha-5/beta-1 (ITGA5/ITGB1). Partially inhibits adhesion of cells expressing alpha-IIb/beta-3 (ITGA2B/ITGB3), alpha-V/beta-3 (ITGAV/ITGB3), and alpha-4/beta-1 (ITGA4/ITGB1) to appropriate ligands only at concentration higher than 500 nM. Weakly inhibits ADP-induced platelet aggregation. The sequence is that of Disintegrin EMF10A from Eristicophis macmahoni (Leaf-nosed viper).